Reading from the N-terminus, the 65-residue chain is Large ribosomal subunit protein bL35c (65 aa).

Residues 25 to 44 (HKASKSHLLQKKSSKQRRHL) show a composition bias toward basic residues. Positions 25–45 (HKASKSHLLQKKSSKQRRHLS) are disordered.

The protein belongs to the bacterial ribosomal protein bL35 family.

It is found in the plastid. It localises to the chloroplast. This chain is Large ribosomal subunit protein bL35c, found in Pyropia yezoensis (Susabi-nori).